A 588-amino-acid polypeptide reads, in one-letter code: L-fucose isomerase (588 aa).

Catalysis depends on proton acceptor residues Glu335 and Asp359. Mn(2+) contacts are provided by Glu335, Asp359, and His525.

Belongs to the L-fucose isomerase family. It depends on Mn(2+) as a cofactor.

It is found in the cytoplasm. The enzyme catalyses L-fucose = L-fuculose. It functions in the pathway carbohydrate degradation; L-fucose degradation; L-lactaldehyde and glycerone phosphate from L-fucose: step 1/3. Converts the aldose L-fucose into the corresponding ketose L-fuculose. This chain is L-fucose isomerase, found in Streptococcus pneumoniae serotype 2 (strain D39 / NCTC 7466).